A 360-amino-acid chain; its full sequence is Chorismate synthase (360 aa).

The interval 36 to 60 is disordered; it reads LSEDDIQPDLDRRKPGTSKYTTPRR. Arg-48 is a binding site for NADP(+). FMN is bound by residues 125-127, 246-247, Gly-286, 301-305, and Arg-327; these read RSS, NA, and KPTSS.

The protein belongs to the chorismate synthase family. As to quaternary structure, homotetramer. The cofactor is FMNH2.

It catalyses the reaction 5-O-(1-carboxyvinyl)-3-phosphoshikimate = chorismate + phosphate. The protein operates within metabolic intermediate biosynthesis; chorismate biosynthesis; chorismate from D-erythrose 4-phosphate and phosphoenolpyruvate: step 7/7. In terms of biological role, catalyzes the anti-1,4-elimination of the C-3 phosphate and the C-6 proR hydrogen from 5-enolpyruvylshikimate-3-phosphate (EPSP) to yield chorismate, which is the branch point compound that serves as the starting substrate for the three terminal pathways of aromatic amino acid biosynthesis. This reaction introduces a second double bond into the aromatic ring system. This Histophilus somni (strain 129Pt) (Haemophilus somnus) protein is Chorismate synthase.